A 539-amino-acid chain; its full sequence is Glucose-6-phosphate isomerase (539 aa).

Glutamate 353 (proton donor) is an active-site residue. Residues histidine 384 and lysine 505 contribute to the active site.

This sequence belongs to the GPI family.

Its subcellular location is the cytoplasm. The enzyme catalyses alpha-D-glucose 6-phosphate = beta-D-fructose 6-phosphate. It functions in the pathway carbohydrate biosynthesis; gluconeogenesis. Its pathway is carbohydrate degradation; glycolysis; D-glyceraldehyde 3-phosphate and glycerone phosphate from D-glucose: step 2/4. Its function is as follows. Catalyzes the reversible isomerization of glucose-6-phosphate to fructose-6-phosphate. In Ralstonia nicotianae (strain ATCC BAA-1114 / GMI1000) (Ralstonia solanacearum), this protein is Glucose-6-phosphate isomerase.